A 232-amino-acid chain; its full sequence is Ion-translocating oxidoreductase complex subunit E (232 aa).

Helical transmembrane passes span 18 to 38 (GLVQ…LTNA), 39 to 59 (LGLG…VSLV), 69 to 89 (IPVF…LINA), 93 to 113 (GLYL…IIIG), 127 to 147 (AAFD…VLGA), and 182 to 202 (PFLL…LIAL).

Belongs to the NqrDE/RnfAE family. The complex is composed of six subunits: RnfA, RnfB, RnfC, RnfD, RnfE and RnfG.

It localises to the cell inner membrane. In terms of biological role, part of a membrane-bound complex that couples electron transfer with translocation of ions across the membrane. The protein is Ion-translocating oxidoreductase complex subunit E of Shewanella sp. (strain MR-4).